We begin with the raw amino-acid sequence, 327 residues long: Pyruvate dehydrogenase E1 component subunit beta (327 aa).

E60 contacts thiamine diphosphate. K(+)-binding residues include I113, A161, I162, and N166.

As to quaternary structure, heterodimer of an alpha and a beta chain. The cofactor is thiamine diphosphate.

It is found in the plastid. It localises to the chloroplast. The enzyme catalyses N(6)-[(R)-lipoyl]-L-lysyl-[protein] + pyruvate + H(+) = N(6)-[(R)-S(8)-acetyldihydrolipoyl]-L-lysyl-[protein] + CO2. The pyruvate dehydrogenase complex catalyzes the overall conversion of pyruvate to acetyl-CoA and CO(2). It contains multiple copies of three enzymatic components: pyruvate dehydrogenase (E1), dihydrolipoamide acetyltransferase (E2) and lipoamide dehydrogenase (E3). The protein is Pyruvate dehydrogenase E1 component subunit beta (pdhB) of Mesostigma viride (Green alga).